A 344-amino-acid chain; its full sequence is Heat-inducible transcription repressor HrcA (344 aa).

This sequence belongs to the HrcA family.

Its function is as follows. Negative regulator of class I heat shock genes (grpE-dnaK-dnaJ and groELS operons). Prevents heat-shock induction of these operons. The polypeptide is Heat-inducible transcription repressor HrcA (Moorella thermoacetica (strain ATCC 39073 / JCM 9320)).